A 252-amino-acid polypeptide reads, in one-letter code: Hydroxyacylglutathione hydrolase (252 aa).

Zn(2+) is bound by residues His54, His56, Asp58, His59, His111, Asp130, and His170.

The protein belongs to the metallo-beta-lactamase superfamily. Glyoxalase II family. Monomer. It depends on Zn(2+) as a cofactor.

The enzyme catalyses an S-(2-hydroxyacyl)glutathione + H2O = a 2-hydroxy carboxylate + glutathione + H(+). Its pathway is secondary metabolite metabolism; methylglyoxal degradation; (R)-lactate from methylglyoxal: step 2/2. Its function is as follows. Thiolesterase that catalyzes the hydrolysis of S-D-lactoyl-glutathione to form glutathione and D-lactic acid. The sequence is that of Hydroxyacylglutathione hydrolase from Francisella tularensis subsp. novicida (strain U112).